A 260-amino-acid polypeptide reads, in one-letter code: Triosephosphate isomerase (260 aa).

Position 11 to 13 (11 to 13) interacts with substrate; the sequence is NWK. The active-site Electrophile is His103. The active-site Proton acceptor is Glu175. Substrate contacts are provided by residues Gly181, Ser220, and 241-242; that span reads GG.

The protein belongs to the triosephosphate isomerase family. As to quaternary structure, homodimer.

It localises to the cytoplasm. It carries out the reaction D-glyceraldehyde 3-phosphate = dihydroxyacetone phosphate. Its pathway is carbohydrate biosynthesis; gluconeogenesis. It functions in the pathway carbohydrate degradation; glycolysis; D-glyceraldehyde 3-phosphate from glycerone phosphate: step 1/1. Involved in the gluconeogenesis. Catalyzes stereospecifically the conversion of dihydroxyacetone phosphate (DHAP) to D-glyceraldehyde-3-phosphate (G3P). The polypeptide is Triosephosphate isomerase (Shewanella woodyi (strain ATCC 51908 / MS32)).